The primary structure comprises 389 residues: 5-hydroxytryptamine receptor 1B (389 aa).

A disordered region spans residues 1–27; sequence MEAAGAPCAPPPPAGSQTGAPPANLSS. Residues 1-45 lie on the Extracellular side of the membrane; sequence MEAAGAPCAPPPPAGSQTGAPPANLSSAPHNCSAEGYIYQDSVAL. The segment covering 16-27 has biased composition (polar residues); that stretch reads SQTGAPPANLSS. Asn-24 and Asn-31 each carry an N-linked (GlcNAc...) asparagine glycan. The helical transmembrane segment at 46 to 71 threads the bilayer; sequence PWKVLLVILLALITLATTLSNAFVIA. The Cytoplasmic portion of the chain corresponds to 72–85; that stretch reads TVYRTRKLHTPANY. The helical transmembrane segment at 86–110 threads the bilayer; sequence LIASLAVTDLLVSILVMPISTMYTV. The Extracellular segment spans residues 111–118; the sequence is TGRWTLGQ. The helical transmembrane segment at 119–144 threads the bilayer; it reads VVCDLWLSSDITCCTASILHLCVIAL. A disulfide bridge links Cys-121 with Cys-198. The ergotamine site is built by Asp-128 and Thr-133. The short motif at 145–147 is the DRY motif; important for ligand-induced conformation changes and signaling element; that stretch reads DRY. The Cytoplasmic segment spans residues 145-164; the sequence is DRYWAITDAVEYSAKRTPKR. A helical membrane pass occupies residues 165–183; sequence AAVMIALVWVFSISISLPP. Residues 184–204 are Extracellular-facing; the sequence is FFWRQAKAEEEVSDCVVNTDH. An ergotamine-binding site is contributed by Val-200. Residues 205 to 228 traverse the membrane as a helical segment; sequence ILYTVYSTVGAFYFPTLLLIALYG. At 229 to 314 the chain is on the cytoplasmic side; it reads RIYVEARSRI…AARERKATKT (86 aa). Polar residues predominate over residues 258–271; the sequence is DSPGSTSSVTSVNS. The disordered stretch occupies residues 258-281; it reads DSPGSTSSVTSVNSRAPDVPSESG. The helical transmembrane segment at 315–336 threads the bilayer; the sequence is LGIILGAFIVCWLPFFIISLVM. Over 337–346 the chain is Extracellular; sequence PICKDACWFH. Residues 347 to 369 traverse the membrane as a helical segment; that stretch reads LAIFDFFTWLGYLNSLINPIIYT. An NPxxY motif; important for ligand-induced conformation changes and signaling motif is present at residues 364 to 368; that stretch reads NPIIY. Over 370 to 389 the chain is Cytoplasmic; that stretch reads MSNEDFKQAFHKLIRFKCAG. Cys-387 carries the S-palmitoyl cysteine lipid modification.

This sequence belongs to the G-protein coupled receptor 1 family. In terms of assembly, homodimer. Heterodimer with HTR1D. In terms of processing, phosphorylated. Desensitization of the receptor may be mediated by its phosphorylation. Post-translationally, palmitoylated.

The protein localises to the cell membrane. G-protein coupled receptor for 5-hydroxytryptamine (serotonin). Also functions as a receptor for ergot alkaloid derivatives, various anxiolytic and antidepressant drugs and other psychoactive substances, such as lysergic acid diethylamide (LSD). Ligand binding causes a conformation change that triggers signaling via guanine nucleotide-binding proteins (G proteins) and modulates the activity of downstream effectors, such as adenylate cyclase. HTR1B is coupled to G(i)/G(o) G alpha proteins and mediates inhibitory neurotransmission by inhibiting adenylate cyclase activity. Arrestin family members inhibit signaling via G proteins and mediate activation of alternative signaling pathways. Regulates the release of 5-hydroxytryptamine, dopamine and acetylcholine in the brain, and thereby affects neural activity, nociceptive processing, pain perception, mood and behavior. Besides, plays a role in vasoconstriction of cerebral arteries. This is 5-hydroxytryptamine receptor 1B (HTR1B) from Canis lupus familiaris (Dog).